The chain runs to 265 residues: Selenoprotein Pb (265 aa).

Positions 1-18 (MQALWPLLLSALPALLGA) are cleaved as a signal peptide. N-linked (GlcNAc...) asparagine glycosylation is present at Asn28. Position 64 (Sec64) is a non-standard amino acid, selenocysteine. Asn88, Asn178, Asn184, and Asn207 each carry an N-linked (GlcNAc...) asparagine glycan. The tract at residues 188–265 (SESSDSTKND…SHQEHVHNHR (78 aa)) is disordered. The segment covering 201–211 (ENNQRPNSTEP) has biased composition (polar residues). Over residues 215–231 (AHHHHHQQHEPHHHHHN) the composition is skewed to basic residues. The segment covering 239 to 265 (KSGDSDVTGKPKEPPHHSHQEHVHNHR) has biased composition (basic and acidic residues).

The protein resides in the secreted. Functionally, might be responsible for some of the extracellular antioxidant defense properties of selenium. This chain is Selenoprotein Pb (sepp1b), found in Danio rerio (Zebrafish).